Reading from the N-terminus, the 256-residue chain is Small ribosomal subunit protein uS2 (256 aa).

It belongs to the universal ribosomal protein uS2 family.

The chain is Small ribosomal subunit protein uS2 from Brucella anthropi (strain ATCC 49188 / DSM 6882 / CCUG 24695 / JCM 21032 / LMG 3331 / NBRC 15819 / NCTC 12168 / Alc 37) (Ochrobactrum anthropi).